Here is a 213-residue protein sequence, read N- to C-terminus: V-type proton ATPase subunit c'' (213 aa).

Over 1 to 14 (MNKESKDDDMSLGK) the chain is Vacuolar. The helical transmembrane segment at 15–35 (FSFSHFLYYLVLIVVIVYGLY) threads the bilayer. Over 36-61 (KLFTGHGSDINFGKFLLRTSPYMWAN) the chain is Cytoplasmic. The chain crosses the membrane as a helical span at residues 62–82 (LGIALCVGLSVVGAAWGIFIT). The Vacuolar portion of the chain corresponds to 83–100 (GSSMIGAGVRAPRITTKN). A helical membrane pass occupies residues 101–121 (LISIIFCEVVAIYGLIIAIVF). Residues 122 to 144 (SSKLTVATAENMYSKSNLYTGYS) are Cytoplasmic-facing. Residues 145-165 (LFWAGITVGASNLICGIAVGI) traverse the membrane as a helical segment. The Vacuolar portion of the chain corresponds to 166–183 (TGATAAISDAADSALFVK). Residues 184–204 (ILVIEIFGSILGLLGLIVGLL) traverse the membrane as a helical segment. The Cytoplasmic portion of the chain corresponds to 205–213 (MAGKASEFQ).

The protein belongs to the V-ATPase proteolipid subunit family. As to quaternary structure, V-ATPase is a heteromultimeric enzyme composed of a peripheral catalytic V1 complex (components A to H) attached to an integral membrane V0 proton pore complex (components: a, c, c', c'', d, e, f and VOA1). The decameric c-ring forms the proton-conducting pore, and is composed of eight proteolipid subunits c, one subunit c' and one subunit c''.

It is found in the vacuole membrane. In terms of biological role, proton-conducting pore forming subunit of the V0 complex of vacuolar(H+)-ATPase (V-ATPase), a multisubunit enzyme composed of a peripheral complex (V1) that hydrolyzes ATP and a membrane integral complex (V0) that translocates protons. V-ATPase is responsible for acidifying and maintaining the pH of intracellular compartments. In Saccharomyces cerevisiae (strain ATCC 204508 / S288c) (Baker's yeast), this protein is V-type proton ATPase subunit c'' (VMA16).